Here is a 352-residue protein sequence, read N- to C-terminus: Histidinol-phosphate aminotransferase (352 aa).

At lysine 216 the chain carries N6-(pyridoxal phosphate)lysine.

The protein belongs to the class-II pyridoxal-phosphate-dependent aminotransferase family. Histidinol-phosphate aminotransferase subfamily. Pyridoxal 5'-phosphate serves as cofactor.

The enzyme catalyses L-histidinol phosphate + 2-oxoglutarate = 3-(imidazol-4-yl)-2-oxopropyl phosphate + L-glutamate. Its pathway is amino-acid biosynthesis; L-histidine biosynthesis; L-histidine from 5-phospho-alpha-D-ribose 1-diphosphate: step 7/9. In Methanoculleus marisnigri (strain ATCC 35101 / DSM 1498 / JR1), this protein is Histidinol-phosphate aminotransferase.